A 633-amino-acid polypeptide reads, in one-letter code: Probable potassium transport system protein Kup 3 (633 aa).

The next 11 membrane-spanning stretches (helical) occupy residues 61–81 (LVSL…VLFL), 107–127 (PVLM…DAMI), 143–163 (VAPA…LLLF), 173–193 (VSVF…AAGV), 211–231 (AIGF…AIFL), 255–275 (WFAV…ALVL), 287–307 (LMFP…GTII), 345–365 (IYLP…MLMF), 371–391 (LAPA…ILAF), 402–422 (ALTA…FLGA), and 427–447 (IHHG…MMWT).

The protein belongs to the HAK/KUP transporter (TC 2.A.72) family.

Its subcellular location is the cell inner membrane. The enzyme catalyses K(+)(in) + H(+)(in) = K(+)(out) + H(+)(out). Its function is as follows. Transport of potassium into the cell. Likely operates as a K(+):H(+) symporter. The protein is Probable potassium transport system protein Kup 3 of Sinorhizobium medicae (strain WSM419) (Ensifer medicae).